Consider the following 211-residue polypeptide: Protein-methionine-sulfoxide reductase heme-binding subunit MsrQ (211 aa).

4 helical membrane passes run 17–37 (LAGL…GLGA), 82–102 (LWCF…ELGV), 116–136 (PYLT…FTST), and 153–173 (FVYL…KIIS).

The protein belongs to the MsrQ family. Heterodimer of a catalytic subunit (MsrP) and a heme-binding subunit (MsrQ). FMN serves as cofactor. It depends on heme b as a cofactor.

Its subcellular location is the cell inner membrane. Part of the MsrPQ system that repairs oxidized periplasmic proteins containing methionine sulfoxide residues (Met-O), using respiratory chain electrons. Thus protects these proteins from oxidative-stress damage caused by reactive species of oxygen and chlorine generated by the host defense mechanisms. MsrPQ is essential for the maintenance of envelope integrity under bleach stress, rescuing a wide series of structurally unrelated periplasmic proteins from methionine oxidation, including the primary periplasmic chaperone SurA and the lipoprotein Pal. MsrQ provides electrons for reduction to the reductase catalytic subunit MsrP, using the quinone pool of the respiratory chain. The protein is Protein-methionine-sulfoxide reductase heme-binding subunit MsrQ of Shigella sonnei (strain Ss046).